The chain runs to 235 residues: TIR domain-containing adapter molecule 2 (235 aa).

A disordered region spans residues 1–39 (MGIGKSKINSCPLSLSWGKRHSVDTSPGYHESDSKKSED). Gly-2 carries N-myristoyl glycine lipidation. Phosphoserine; by PKC/PRKCE is present on Ser-16. Residues 30 to 39 (HESDSKKSED) show a composition bias toward basic and acidic residues. In terms of domain architecture, TIR spans 73–229 (AEEEVFLKFV…TIWKETRNMV (157 aa)). Residue Tyr-167 is modified to Phosphotyrosine.

In terms of assembly, homodimer. Interacts with TLR4, TICAM1, IRF3 and IRF7 in response to LPS. Interacts with IL1R1, IL1RAP, IRAK2, IRAK3 and TRAF6. Interacts with protein kinase-inactive mutants of IRAK1 and IRAK4. Isoform 1 interacts with isoform 2; the interaction occurs in late endosomes and disrupts the interaction between isoform 1 and TICAM1. Interacts with MYD88; the interaction decreases after IL-18 stimulation in a time-dependent manner. Interacts with IL18R1 and IL18RAP. Interacts with TLR2. Interacts with RAB11FIP2. In terms of processing, phosphorylated by PRKCE in response to LPS. Phosphorylation is essential for its function. It is depleted from the membrane upon phosphorylation. Tyrosine phosphorylation is inhibited by phosphatase PTPN4. Isoform 1 is myristoylated. Required for membrane association which is critical for its ability to initiate efficient signaling. As to expression, expressed in spleen, prostate, testis, uterus, small intestine, colon, peripheral blood leukocytes, heart, placenta, lung, liver, skeletal muscle, and pancreas Isoform 2 is ubiquitously expressed (at lower levels than isoform 1).

The protein localises to the cytoplasm. The protein resides in the golgi apparatus. It localises to the cell membrane. Its subcellular location is the endoplasmic reticulum. It is found in the early endosome membrane. The protein localises to the late endosome membrane. The protein resides in the cell projection. It localises to the phagocytic cup. Its function is as follows. Functions as a sorting adapter in different signaling pathways to facilitate downstream signaling leading to type I interferon induction. In TLR4 signaling, physically bridges TLR4 and TICAM1 and functionally transmits signal to TICAM1 in early endosomes after endocytosis of TLR4. In TLR2 signaling, physically bridges TLR2 and MYD88 and is required for the TLR2-dependent movement of MYD88 to endosomes following ligand engagement. Involved in IL-18 signaling and is proposed to function as a sorting adapter for MYD88 in IL-18 signaling during adaptive immune response. Forms a complex with RAB11FIP2 that is recruited to the phagosomes to promote the activation of the actin-regulatory GTPases RAC1 and CDC42 and subsequent phagocytosis of Gram-negative bacteria. Proposed to inhibit LPS-TLR4 signaling at the late endosome by interaction with isoform 1 thereby disrupting the association of isoform 1 with TICAM1. May be involved in TLR4 degradation in late endosomes. This is TIR domain-containing adapter molecule 2 (TICAM2) from Homo sapiens (Human).